The following is a 292-amino-acid chain: UTP--glucose-1-phosphate uridylyltransferase (292 aa).

This sequence belongs to the UDPGP type 2 family. Interacts with FloT.

Its subcellular location is the cell membrane. The protein resides in the membrane raft. The enzyme catalyses alpha-D-glucose 1-phosphate + UTP + H(+) = UDP-alpha-D-glucose + diphosphate. The protein operates within glycolipid metabolism; diglucosyl-diacylglycerol biosynthesis. Functionally, catalyzes the formation of UDP-glucose from glucose-1-phosphate and UTP. This is an intermediate step in the biosynthesis of diglucosyl-diacylglycerol (Glc2-DAG), i.e. the predominant glycolipid found in B.subtilis membrane, which is also used as a membrane anchor for lipoteichoic acid (LTA). Has a role in the biosynthesis of all phosphate-containing envelope polymers, since UDP-glucose serves as a glucosyl donor not only for the biosynthesis of LTA but also for wall teichoic acids (WTAs). Is required for biofilm formation. This is likely due to another role of UDP-glucose, which might also act as a metabolic signal regulating biofilm formation or may be involved in some unknown biosynthetic pathway essential for biofilm formation, e.g. the synthesis of an exopolysaccharide. The polypeptide is UTP--glucose-1-phosphate uridylyltransferase (gtaB) (Bacillus subtilis (strain 168)).